The primary structure comprises 33 residues: MLFTIAWASLAAVFSFSIAMVVWGRNGDGTLNF.

A helical transmembrane segment spans residues 2–22 (LFTIAWASLAAVFSFSIAMVV).

This sequence belongs to the PetN family. In terms of assembly, the 4 large subunits of the cytochrome b6-f complex are cytochrome b6, subunit IV (17 kDa polypeptide, PetD), cytochrome f and the Rieske protein, while the 4 small subunits are PetG, PetL, PetM and PetN. The complex functions as a dimer.

It localises to the cellular thylakoid membrane. Its function is as follows. Component of the cytochrome b6-f complex, which mediates electron transfer between photosystem II (PSII) and photosystem I (PSI), cyclic electron flow around PSI, and state transitions. This Synechococcus sp. (strain CC9311) protein is Cytochrome b6-f complex subunit 8.